A 334-amino-acid chain; its full sequence is GTPase Obg (334 aa).

Residues 4-162 form the Obg domain; it reads FDFIDEVKKY…GWIKLELKLL (159 aa). Residues 163–330 form the OBG-type G domain; that stretch reads AEVGLVGFPN…FKDKIWKLLH (168 aa). Residues 169 to 176, 194 to 198, 216 to 219, 284 to 287, and 311 to 313 contribute to the GTP site; these read GFPNAGKS, FTTLV, DMPG, SKLD, and SSV. Positions 176 and 196 each coordinate Mg(2+).

It belongs to the TRAFAC class OBG-HflX-like GTPase superfamily. OBG GTPase family. Monomer. Mg(2+) serves as cofactor.

It localises to the cytoplasm. An essential GTPase which binds GTP, GDP and possibly (p)ppGpp with moderate affinity, with high nucleotide exchange rates and a fairly low GTP hydrolysis rate. Plays a role in control of the cell cycle, stress response, ribosome biogenesis and in those bacteria that undergo differentiation, in morphogenesis control. In Amoebophilus asiaticus (strain 5a2), this protein is GTPase Obg.